Here is a 432-residue protein sequence, read N- to C-terminus: 3-phosphoshikimate 1-carboxyvinyltransferase (432 aa).

3 residues coordinate 3-phosphoshikimate: Lys21, Ser22, and Arg26. A phosphoenolpyruvate-binding site is contributed by Lys21. Phosphoenolpyruvate contacts are provided by Gly93 and Arg121. Residues Ser166, Gln168, Asp318, and Lys345 each coordinate 3-phosphoshikimate. Position 168 (Gln168) interacts with phosphoenolpyruvate. Asp318 functions as the Proton acceptor in the catalytic mechanism. The phosphoenolpyruvate site is built by Arg349 and Arg391.

The protein belongs to the EPSP synthase family. As to quaternary structure, monomer.

It localises to the cytoplasm. It catalyses the reaction 3-phosphoshikimate + phosphoenolpyruvate = 5-O-(1-carboxyvinyl)-3-phosphoshikimate + phosphate. Its pathway is metabolic intermediate biosynthesis; chorismate biosynthesis; chorismate from D-erythrose 4-phosphate and phosphoenolpyruvate: step 6/7. In terms of biological role, catalyzes the transfer of the enolpyruvyl moiety of phosphoenolpyruvate (PEP) to the 5-hydroxyl of shikimate-3-phosphate (S3P) to produce enolpyruvyl shikimate-3-phosphate and inorganic phosphate. The polypeptide is 3-phosphoshikimate 1-carboxyvinyltransferase (Persephonella marina (strain DSM 14350 / EX-H1)).